We begin with the raw amino-acid sequence, 91 residues long: DNA-directed RNA polymerase subunit Rpo11 (91 aa).

Belongs to the archaeal Rpo11/eukaryotic RPB11/RPC19 RNA polymerase subunit family. In terms of assembly, part of the RNA polymerase complex.

It is found in the cytoplasm. The catalysed reaction is RNA(n) + a ribonucleoside 5'-triphosphate = RNA(n+1) + diphosphate. In terms of biological role, DNA-dependent RNA polymerase (RNAP) catalyzes the transcription of DNA into RNA using the four ribonucleoside triphosphates as substrates. This chain is DNA-directed RNA polymerase subunit Rpo11, found in Methanococcoides burtonii (strain DSM 6242 / NBRC 107633 / OCM 468 / ACE-M).